The primary structure comprises 101 residues: Small ribosomal subunit protein uS14 (101 aa).

It belongs to the universal ribosomal protein uS14 family. Part of the 30S ribosomal subunit. Contacts proteins S3 and S10.

Binds 16S rRNA, required for the assembly of 30S particles and may also be responsible for determining the conformation of the 16S rRNA at the A site. In Hyphomonas neptunium (strain ATCC 15444), this protein is Small ribosomal subunit protein uS14.